The primary structure comprises 439 residues: MRRRRKLEHKTYKLNIESFSHEGRGIAHFEDKIIFVSDALPGELVIANRTFSCAKFEEADAKEILKPADNRMKPKCDVFGICGGCSFQNLSSEDQIQIKSRWLKKVFARQAKVEPETWLKSLQFQSWGYRRKARLGIRYVAKKDKVLIGFRERKSSFITNMSRCEVLHPSIGEHLEVLANCIERLSIKSSIPQFEVVISESGIALILRHLESLSVKDEKILADCAQELNITFYTQSGGLDSVKPLDEPTILTYSHSNYNIIMEFLPTDFVQVNFKLNQQMVSLAVELLELNESDKVIDLFCGLGNFTLPIARYAKYVVGIEGDLGLVERAKYNAEKNSINNVDFYRSDLCKEVVGFEWFKGKTYNKALIDPSRSGAIEIVELLPKLGVTRLVYVSCNPATLARDTLKLIKLGFTLETAGVIDMFPQTSHVESIALFVKR.

The 59-residue stretch at 5 to 63 (RKLEHKTYKLNIESFSHEGRGIAHFEDKIIFVSDALPGELVIANRTFSCAKFEEADAKE) folds into the TRAM domain. [4Fe-4S] cluster contacts are provided by C76, C82, C85, and C164. S-adenosyl-L-methionine-binding residues include Q271, F300, N305, E321, D348, and D370. C396 serves as the catalytic Nucleophile.

It belongs to the class I-like SAM-binding methyltransferase superfamily. RNA M5U methyltransferase family. RlmD subfamily.

It catalyses the reaction uridine(1939) in 23S rRNA + S-adenosyl-L-methionine = 5-methyluridine(1939) in 23S rRNA + S-adenosyl-L-homocysteine + H(+). Functionally, catalyzes the formation of 5-methyl-uridine at position 1939 (m5U1939) in 23S rRNA. This chain is 23S rRNA (uracil(1939)-C(5))-methyltransferase RlmD, found in Vesicomyosocius okutanii subsp. Calyptogena okutanii (strain HA).